Consider the following 67-residue polypeptide: Minor structural pilin EpdD (67 aa).

The propeptide occupies 1–13 (MSVALKKFFSKRG). The short motif at 14-22 (QLSLEFSVL) is the QXSXEXXXL element.

In terms of processing, the N-terminus is cleaved by the prepilin peptidase EppA, which recognizes the class III signal sequence. N-glycosylated. Glycosylation is AglB-dependent. The N-glycosylation does not occur unless the signal peptide has been cleaved first.

The protein resides in the secreted. Its subcellular location is the cell surface. The protein localises to the fimbrium. Minor component of the type IV-like pili. Essential for pili formation. In Methanococcus maripaludis (strain DSM 14266 / JCM 13030 / NBRC 101832 / S2 / LL), this protein is Minor structural pilin EpdD.